A 731-amino-acid polypeptide reads, in one-letter code: Beta-galactosidase (731 aa).

An N-terminal signal peptide occupies residues 1-23 (MGVGIQTMWSILLLFSCIFSAAS). E182 functions as the Proton donor in the catalytic mechanism. The Nucleophile role is filled by E251. N-linked (GlcNAc...) asparagine glycosylation occurs at N459.

Belongs to the glycosyl hydrolase 35 family.

Its subcellular location is the secreted. The protein localises to the extracellular space. The protein resides in the apoplast. The enzyme catalyses Hydrolysis of terminal non-reducing beta-D-galactose residues in beta-D-galactosides.. Involved in cell wall degradation. Degrades polysaccharides containing beta-(1--&gt;4)-linked galactans, acting as an exo-(1--&gt;4)-beta-D-galactanase. The chain is Beta-galactosidase from Malus domestica (Apple).